Reading from the N-terminus, the 103-residue chain is MYAIIMTGGKQYKVQEGDVVFLEKLAAEEGSSVTFDKVLAVSKEGNLSFGAPVLESASVSGKVLNHGKGEKIIVFKYKAKKNIRKKKGHRQPYTKVQIEKINA.

Belongs to the bacterial ribosomal protein bL21 family. As to quaternary structure, part of the 50S ribosomal subunit. Contacts protein L20.

In terms of biological role, this protein binds to 23S rRNA in the presence of protein L20. This is Large ribosomal subunit protein bL21 from Ruminiclostridium cellulolyticum (strain ATCC 35319 / DSM 5812 / JCM 6584 / H10) (Clostridium cellulolyticum).